A 197-amino-acid chain; its full sequence is Fucoxanthin-chlorophyll a-c binding protein C, chloroplastic (197 aa).

The transit peptide at 1-31 (MKTAVIASLIAGAAAFAPAKNAARTSVATNM) directs the protein to the chloroplast. The next 3 helical transmembrane spans lie at 73–94 (ISMLAVVGYLVQEAGVRLPGTI), 113–133 (IPAGGLVQLLFFIGVLESSVM), and 174–196 (GRAAQMGILAFMVHEQLGVSLLP).

Belongs to the fucoxanthin chlorophyll protein family. The LHC complex of chromophytic algae is composed of fucoxanthin, chlorophyll A and C bound non-covalently by fucoxanthin chlorophyll proteins (FCPs). The ratio of the pigments in LHC; fucoxanthin: chlorophyll C: chlorophyll A; (0.6-1): (0.1-0.3): (1).

It is found in the plastid. It localises to the chloroplast thylakoid membrane. Functionally, the light-harvesting complex (LHC) functions as a light receptor, it captures and delivers excitation energy to photosystems with which it is closely associated. Energy is transferred from the carotenoid and chlorophyll C (or B) to chlorophyll A and the photosynthetic reaction centers where it is used to synthesize ATP and reducing power. This is Fucoxanthin-chlorophyll a-c binding protein C, chloroplastic (FCPC) from Phaeodactylum tricornutum (Diatom).